We begin with the raw amino-acid sequence, 729 residues long: Fatty acid oxidation complex subunit alpha (729 aa).

The enoyl-CoA hydratase/isomerase stretch occupies residues 1-189 (MLYKGDTLYL…KIGLVDGVVK (189 aa)). Position 296 (Asp296) interacts with substrate. Residues 311–729 (ETPKQAAVLG…ARPVGDLKTA (419 aa)) form a 3-hydroxyacyl-CoA dehydrogenase region. NAD(+)-binding positions include Met324, Asp343, 400-402 (VVE), Lys407, and Ser429. The For 3-hydroxyacyl-CoA dehydrogenase activity role is filled by His450. Asn453 provides a ligand contact to NAD(+). Residues Asn500 and Tyr660 each coordinate substrate. The tract at residues 707–729 (ARHNEPYYPPVEPARPVGDLKTA) is disordered.

The protein in the N-terminal section; belongs to the enoyl-CoA hydratase/isomerase family. It in the C-terminal section; belongs to the 3-hydroxyacyl-CoA dehydrogenase family. In terms of assembly, heterotetramer of two alpha chains (FadB) and two beta chains (FadA).

The enzyme catalyses a (3S)-3-hydroxyacyl-CoA + NAD(+) = a 3-oxoacyl-CoA + NADH + H(+). It carries out the reaction a (3S)-3-hydroxyacyl-CoA = a (2E)-enoyl-CoA + H2O. It catalyses the reaction a 4-saturated-(3S)-3-hydroxyacyl-CoA = a (3E)-enoyl-CoA + H2O. The catalysed reaction is (3S)-3-hydroxybutanoyl-CoA = (3R)-3-hydroxybutanoyl-CoA. The enzyme catalyses a (3Z)-enoyl-CoA = a 4-saturated (2E)-enoyl-CoA. It carries out the reaction a (3E)-enoyl-CoA = a 4-saturated (2E)-enoyl-CoA. Its pathway is lipid metabolism; fatty acid beta-oxidation. Involved in the aerobic and anaerobic degradation of long-chain fatty acids via beta-oxidation cycle. Catalyzes the formation of 3-oxoacyl-CoA from enoyl-CoA via L-3-hydroxyacyl-CoA. It can also use D-3-hydroxyacyl-CoA and cis-3-enoyl-CoA as substrate. The protein is Fatty acid oxidation complex subunit alpha of Escherichia coli O6:K15:H31 (strain 536 / UPEC).